Consider the following 236-residue polypeptide: Small ribosomal subunit protein uS3 (236 aa).

The KH type-2 domain occupies 39–107 (IRLYVLEELK…ETSLNIVEIH (69 aa)).

This sequence belongs to the universal ribosomal protein uS3 family. In terms of assembly, part of the 30S ribosomal subunit. Forms a tight complex with proteins S10 and S14.

Its function is as follows. Binds the lower part of the 30S subunit head. Binds mRNA in the 70S ribosome, positioning it for translation. This chain is Small ribosomal subunit protein uS3, found in Bartonella quintana (strain Toulouse) (Rochalimaea quintana).